The following is a 315-amino-acid chain: Thioredoxin reductase (315 aa).

34-41 serves as a coordination point for FAD; sequence EGQKVGGQ. A disulfide bridge links cysteine 134 with cysteine 137. 282 to 291 contributes to the FAD binding site; that stretch reads DIRVKSLRQV.

It belongs to the class-II pyridine nucleotide-disulfide oxidoreductase family. In terms of assembly, homodimer. Requires FAD as cofactor.

The protein localises to the cytoplasm. The catalysed reaction is [thioredoxin]-dithiol + NADP(+) = [thioredoxin]-disulfide + NADPH + H(+). The chain is Thioredoxin reductase (trxB) from Peptoclostridium acidaminophilum (Eubacterium acidaminophilum).